The sequence spans 491 residues: CTD small phosphatase-like protein 1 (491 aa).

4 disordered regions span residues 1-53, 140-198, 221-249, and 261-282; these read MTYA…SLDY, KLTK…TARR, KIQS…TGPP, and TVTG…DGVT. Over residues 17–26 the composition is skewed to pro residues; sequence VPPPRTPVGP. Polar residues predominate over residues 37–49; the sequence is SASQPLQPKNGAN. A compositionally biased stretch (basic and acidic residues) spans 141 to 156; that stretch reads LTKDEKNGGKMNRDGG. A compositionally biased stretch (polar residues) spans 176-187; it reads ASTPLNSFSANA. Residues 223 to 237 show a composition bias toward low complexity; it reads QSSQRTNSTNNNHQN. 2 stretches are compositionally biased toward polar residues: residues 238–249 and 264–276; these read GRPSTPTNTGPP and GLPT…QQNG. The FCP1 homology domain maps to 307 to 465; it reads QDSNKKCLVI…LDILPSLEHL (159 aa). Aspartate 317 functions as the 4-aspartylphosphate intermediate in the catalytic mechanism. The Mg(2+) site is built by aspartate 317, aspartate 319, and asparagine 428. Aspartate 319 functions as the Proton donor in the catalytic mechanism.

May interact (via phosphatase domain) with cpna-1. Isoform a and isoform b may interact with lim-9 (via LIM zinc-binding domain). Isoform a and isoform b may interact (via FCP1 homology domain) with unc-89 (via fibronectin type-III domain 1, Ig-like C2-type domain 48/49 and protein kinase domain 1 or Ig-like C2-type domain 50, fibronectin type-III domain 2 and protein kinase domain 2); the interaction may act as a molecular bridge to bring two unc-89 molecules together or to stabilize a loop between the 2 protein kinase domains. Mg(2+) serves as cofactor. In terms of tissue distribution, expressed in pharyngeal, vulval and body wall muscles.

It is found in the cytoplasm. The protein resides in the myofibril. It localises to the sarcomere. Its subcellular location is the m line. The enzyme catalyses O-phospho-L-seryl-[protein] + H2O = L-seryl-[protein] + phosphate. It carries out the reaction O-phospho-L-threonyl-[protein] + H2O = L-threonyl-[protein] + phosphate. With respect to regulation, inhibited by beryllium trifluoride (BeF(3-)) and tetrafluoroaluminate (AlF(4-)) but not by sodium fluoride (NaF) or sodium orthovanadate (Na3VO4). Phosphatase which may play a role in the egg laying muscles. This chain is CTD small phosphatase-like protein 1, found in Caenorhabditis elegans.